The following is a 455-amino-acid chain: MAAPEEHDSPTEASQPIVEEEETKTFKDLGVTDVLCEACDQLGWTKPTKIQIEAIPLALQGRDIIGLAETGSGKTGAFALPILNALLETPQRLFALVLTPTRELAFQISEQFEALGSSIGVQSAVIVGGIDSMSQSLALAKKPHIIIATPGRLIDHLENTKGFNLRALKYLVMDEADRILNMDFETEVDKILKVIPRDRKTFLFSATMTKKVQKLQRAALKNPVKCAVSSKYQTVEKLQQYYIFIPSKFKDTYLVYILNELAGNSFMIFCSTCNNTQRTALLLRNLGFTAIPLHGQMSQSKRLGSLNKFKAKARSILLATDVASRGLDIPHVDVVVNFDIPTHSKDYIHRVGRTARAGRSGKAITFVTQYDVELFQRIEHLIGKKLPGFPTQDDEVMMLTERVAEAQRFARMELREHGEKKKRSREDAGDNDDTEGAIGVRNKVAGGKMKKRKGR.

Basic and acidic residues predominate over residues 1-10 (MAAPEEHDSP). Positions 1 to 20 (MAAPEEHDSPTEASQPIVEE) are disordered. Residue alanine 2 is modified to N-acetylalanine. Position 9 is a phosphoserine (serine 9). The short motif at 24 to 52 (KTFKDLGVTDVLCEACDQLGWTKPTKIQI) is the Q motif element. The Helicase ATP-binding domain maps to 55-226 (IPLALQGRDI…RAALKNPVKC (172 aa)). Residue 68 to 75 (AETGSGKT) participates in ATP binding. Threonine 149 carries the post-translational modification Phosphothreonine. A DEAD box motif is present at residues 174–177 (DEAD). The Helicase C-terminal domain maps to 237 to 397 (KLQQYYIFIP…GFPTQDDEVM (161 aa)). The segment covering 413 to 428 (ELREHGEKKKRSREDA) has biased composition (basic and acidic residues). A disordered region spans residues 413-455 (ELREHGEKKKRSREDAGDNDDTEGAIGVRNKVAGGKMKKRKGR). Phosphoserine is present on serine 424.

Belongs to the DEAD box helicase family. DDX47/RRP3 subfamily. In terms of assembly, interacts with AGO1 and AGO2. Interacts with GABARAP. Interacts with NOL8; the interaction is RNA-dependent. As to expression, expressed in skin, lung and breast. Also expressed in the brain.

It is found in the nucleus. The protein resides in the nucleolus. It carries out the reaction ATP + H2O = ADP + phosphate + H(+). In terms of biological role, required for efficient ribosome biogenesis. May have a role in mRNA splicing. Involved in apoptosis. The chain is Probable ATP-dependent RNA helicase DDX47 (DDX47) from Homo sapiens (Human).